Consider the following 255-residue polypeptide: Thiazole synthase (255 aa).

The Schiff-base intermediate with DXP role is filled by Lys96. 1-deoxy-D-xylulose 5-phosphate-binding positions include Gly157, 183-184, and 205-206; these read AG and NT.

Belongs to the ThiG family. Homotetramer. Forms heterodimers with either ThiH or ThiS.

Its subcellular location is the cytoplasm. The catalysed reaction is [ThiS sulfur-carrier protein]-C-terminal-Gly-aminoethanethioate + 2-iminoacetate + 1-deoxy-D-xylulose 5-phosphate = [ThiS sulfur-carrier protein]-C-terminal Gly-Gly + 2-[(2R,5Z)-2-carboxy-4-methylthiazol-5(2H)-ylidene]ethyl phosphate + 2 H2O + H(+). Its pathway is cofactor biosynthesis; thiamine diphosphate biosynthesis. Functionally, catalyzes the rearrangement of 1-deoxy-D-xylulose 5-phosphate (DXP) to produce the thiazole phosphate moiety of thiamine. Sulfur is provided by the thiocarboxylate moiety of the carrier protein ThiS. In vitro, sulfur can be provided by H(2)S. The chain is Thiazole synthase from Bacillus pumilus (strain SAFR-032).